Here is a 94-residue protein sequence, read N- to C-terminus: Small ribosomal subunit protein bS6 (94 aa).

Belongs to the bacterial ribosomal protein bS6 family.

Its function is as follows. Binds together with bS18 to 16S ribosomal RNA. The polypeptide is Small ribosomal subunit protein bS6 (Clostridium botulinum (strain Hall / ATCC 3502 / NCTC 13319 / Type A)).